The primary structure comprises 413 residues: Multifunctional CCA protein (413 aa).

Positions 8 and 11 each coordinate ATP. Residues G8 and R11 each contribute to the CTP site. Residues D21 and D23 each contribute to the Mg(2+) site. Residues R91, R137, and R140 each coordinate ATP. CTP contacts are provided by R91, R137, and R140. Residues 228–329 (TGLHTLMTVT…VKLFDSIDAW (102 aa)) form the HD domain.

It belongs to the tRNA nucleotidyltransferase/poly(A) polymerase family. Bacterial CCA-adding enzyme type 1 subfamily. As to quaternary structure, monomer. Can also form homodimers and oligomers. It depends on Mg(2+) as a cofactor. Ni(2+) serves as cofactor.

The catalysed reaction is a tRNA precursor + 2 CTP + ATP = a tRNA with a 3' CCA end + 3 diphosphate. The enzyme catalyses a tRNA with a 3' CCA end + 2 CTP + ATP = a tRNA with a 3' CCACCA end + 3 diphosphate. In terms of biological role, catalyzes the addition and repair of the essential 3'-terminal CCA sequence in tRNAs without using a nucleic acid template. Adds these three nucleotides in the order of C, C, and A to the tRNA nucleotide-73, using CTP and ATP as substrates and producing inorganic pyrophosphate. tRNA 3'-terminal CCA addition is required both for tRNA processing and repair. Also involved in tRNA surveillance by mediating tandem CCA addition to generate a CCACCA at the 3' terminus of unstable tRNAs. While stable tRNAs receive only 3'-terminal CCA, unstable tRNAs are marked with CCACCA and rapidly degraded. The polypeptide is Multifunctional CCA protein (Klebsiella pneumoniae subsp. pneumoniae (strain ATCC 700721 / MGH 78578)).